The chain runs to 404 residues: Nesprin-4 (404 aa).

Disordered stretches follow at residues 1–91 (MALS…GGKH) and 277–347 (GQRG…GAPD). The Cytoplasmic segment spans residues 1–355 (MALSLPLGPR…PDPASRQPLT (355 aa)). Residues 39-52 (EESTSPEQAQTLGQ) show a composition bias toward polar residues. A compositionally biased stretch (basic residues) spans 307–320 (HQKRLARHQRHSLL). The region spanning 347 to 404 (DPASRQPLTFLLILFLLFLLLVGAMFLLPASGGPCCSHARIPRTPYLVLSYVNGLPPV) is the KASH domain. The helical; Anchor for type IV membrane protein transmembrane segment at 356 to 376 (FLLILFLLFLLLVGAMFLLPA) threads the bilayer. The Perinuclear space segment spans residues 377–404 (SGGPCCSHARIPRTPYLVLSYVNGLPPV).

The protein belongs to the nesprin family. Core component of LINC complexes which are composed of inner nuclear membrane SUN domain-containing proteins coupled to outer nuclear membrane KASH domain-containing nesprins. SUN and KASH domain-containing proteins seem to bind each other promiscuously; however, differentially expression of LINC complex constituents can give rise to specific assemblies. Probably part of a SUN1-containing LINC complex. Interacts with kinesins KIF5B and KLC1. In terms of processing, the disulfid bond with SUN1 or SUN2 is required for stability of the respective LINC complex under tensile forces.

It is found in the nucleus outer membrane. As a component of the LINC (LInker of Nucleoskeleton and Cytoskeleton) complex, involved in the connection between the nuclear lamina and the cytoskeleton. The nucleocytoplasmic interactions established by the LINC complex play an important role in the transmission of mechanical forces across the nuclear envelope and in nuclear movement and positioning. Behaves as a kinesin cargo, providing a functional binding site for kinesin-1 at the nuclear envelope. Hence may contribute to the establishment of secretory epithelial morphology by promoting kinesin-dependent apical migration of the centrosome and Golgi apparatus and basal localization of the nucleus. The sequence is that of Nesprin-4 (SYNE4) from Homo sapiens (Human).